Reading from the N-terminus, the 172-residue chain is Adenine phosphoribosyltransferase (172 aa).

It belongs to the purine/pyrimidine phosphoribosyltransferase family. As to quaternary structure, homodimer.

The protein resides in the cytoplasm. The catalysed reaction is AMP + diphosphate = 5-phospho-alpha-D-ribose 1-diphosphate + adenine. Its pathway is purine metabolism; AMP biosynthesis via salvage pathway; AMP from adenine: step 1/1. Functionally, catalyzes a salvage reaction resulting in the formation of AMP, that is energically less costly than de novo synthesis. The polypeptide is Adenine phosphoribosyltransferase (Exiguobacterium sp. (strain ATCC BAA-1283 / AT1b)).